The primary structure comprises 426 residues: Testicular acid phosphatase (426 aa).

An N-terminal signal peptide occupies residues 1-26 (MAGLGFWGHPAGPLLLLLLLVLPPRA). Over 27 to 393 (LPEGPLVFVA…AAIPPAPVVP (367 aa)) the chain is Extracellular. The active-site Nucleophile is the His41. 3 disulfides stabilise this stretch: Cys159/Cys378, Cys214/Cys312, and Cys353/Cys357. 2 N-linked (GlcNAc...) asparagine glycosylation sites follow: Asn191 and Asn269. Asp289 acts as the Proton donor in catalysis. Residues Asn330 and Asn339 are each glycosylated (N-linked (GlcNAc...) asparagine). A helical membrane pass occupies residues 394–414 (LLAGAVAVLVALSLGLGLLAW). Topologically, residues 415-426 (RPGCLRALGGPV) are cytoplasmic.

It belongs to the histidine acid phosphatase family. As to quaternary structure, homodimer. In terms of processing, glycosylated. Expressed mainly in the testis. Also expressed in the brain where they are enriched at the postsynaptic sites. Expressed at lower levels in the trachea, prostate, bone marrow, spinal cord, colon, fetal brain, heart, thymus, fetal liver, spleen, leukocytes, ovary, small intestine, pancreas and skeletal muscle. Expression is significantly lower in testicular cancer tissues than in normal testicular tissues. Isoform 3 is expressed in the testis, trachea, prostate and bone marrow.

It localises to the membrane. It carries out the reaction a phosphate monoester + H2O = an alcohol + phosphate. In terms of biological role, may dephosphorylate receptor tyrosine-protein kinase ERBB4 and inhibits its ligand-induced proteolytic cleavage. May play a role in odontogenesis. The sequence is that of Testicular acid phosphatase from Homo sapiens (Human).